The primary structure comprises 104 residues: DNA-binding transcriptional repressor TubR (104 aa).

2 DNA-binding regions (HTH) span residues 43–50 (KTAVAEMI) and 54–65 (KPTVFATVNSFY).

In terms of assembly, homodimer. Binds to tubC DNA, the TubR-DNA complex binds to TubZ.

In terms of biological role, a DNA-binding protein that is part of the type III plasmid partition system used to ensure correct segregation of the pBtoxis plasmid. Cooperatively binds to the centromere-like site (tubC), which may seed filament formation by the TubZ polymerizing GTPase, stabilizing TubZ filaments. TubR-tubC complexes track the depolymerizing minus end of the filament, probably pulling plasmid within the cell. Required for plasmid replication. Negatively regulates levels of TubZ; its effect on RNA expression has not been shown. Specifically binds iterons, 12-bp imperfect direct repeats that function as a plasmid origin of replication. Four TubR dimers bind to tubC, forming an extended bent DNA-protein filament with protein wrapping helically around the outside of the DNA. This Bacillus thuringiensis subsp. israelensis protein is DNA-binding transcriptional repressor TubR.